A 555-amino-acid chain; its full sequence is WRKY transcription factor WRKY24 (555 aa).

2 disordered regions span residues 133-183 and 197-248; these read TAPA…AGAN and SEMA…CTFP. The segment covering 163–183 has biased composition (low complexity); that stretch reads QQQQQPWGYQQQPAGMDAGAN. The segment at residues 214–278 is a DNA-binding region (WRKY 1); that stretch reads SQRRSSDDGY…YKGTHNHAKP (65 aa). A Nuclear localization signal motif is present at residues 253 to 259; that stretch reads KKKVERS. A disordered region spans residues 270–365; it reads KGTHNHAKPQ…DGEGISMAGN (96 aa). Composition is skewed to polar residues over residues 277–294 and 310–320; these read KPQN…QVLQ and TAATPENSSAS. Residues 347 to 356 show a composition bias toward basic and acidic residues; it reads DSKRWRKDGD. The segment at residues 379 to 444 is a DNA-binding region (WRKY 2); the sequence is SDIDILDDGY…YEGKHNHDVP (66 aa). The segment at 466–555 is transcription repression of gibberellic acid (GA)-induced promoters; sequence HPYLPNQPPP…DDMFFQNSLY (90 aa). The tract at residues 514 to 555 is disordered; that stretch reads FDDARGSYMSQHQQQQRQNDAMHASRAKEEPGDDMFFQNSLY.

This sequence belongs to the WRKY group II-a family. Expressed in aleurone cells. Mostly expressed in aleurone layers and leaves, and, to a lower extent, in roots, panicles and embryos.

It is found in the nucleus. In terms of biological role, transcription activator. Interacts specifically with the W box (5'-(T)TGAC[CT]-3'), a frequently occurring elicitor-responsive cis-acting element. Negative regulator of both gibberellic acid (GA) and abscisic acid (ABA) signaling in aleurone cells, probably by interfering with GAM1, via the specific repression of GA- and ABA-induced promoters. The chain is WRKY transcription factor WRKY24 from Oryza sativa subsp. japonica (Rice).